Consider the following 101-residue polypeptide: Cilia- and flagella-associated protein 141 (101 aa).

As to quaternary structure, microtubule inner protein component of sperm flagellar doublet microtubules. As to expression, expressed in trachea multiciliated cells.

Its subcellular location is the cytoplasm. It is found in the cytoskeleton. The protein localises to the cilium axoneme. It localises to the flagellum axoneme. Its function is as follows. Microtubule inner protein (MIP) part of the dynein-decorated doublet microtubules (DMTs) in cilia axoneme, which is required for motile cilia beating. This Bos taurus (Bovine) protein is Cilia- and flagella-associated protein 141.